A 427-amino-acid polypeptide reads, in one-letter code: Adenylosuccinate synthetase (427 aa).

Residues 12-18 (GDEGKGK) and 40-42 (GHT) contribute to the GTP site. Aspartate 13 functions as the Proton acceptor in the catalytic mechanism. Residues aspartate 13 and glycine 40 each contribute to the Mg(2+) site. Residues 13-16 (DEGK), 38-41 (NAGH), threonine 128, arginine 142, glutamine 223, threonine 238, and arginine 302 contribute to the IMP site. Residue histidine 41 is the Proton donor of the active site. 298-304 (TTTGRPR) serves as a coordination point for substrate. GTP-binding positions include arginine 304, 330-332 (SID), and 412-414 (SVG).

It belongs to the adenylosuccinate synthetase family. As to quaternary structure, homodimer. Requires Mg(2+) as cofactor.

The protein localises to the cytoplasm. The catalysed reaction is IMP + L-aspartate + GTP = N(6)-(1,2-dicarboxyethyl)-AMP + GDP + phosphate + 2 H(+). It functions in the pathway purine metabolism; AMP biosynthesis via de novo pathway; AMP from IMP: step 1/2. Functionally, plays an important role in the de novo pathway of purine nucleotide biosynthesis. Catalyzes the first committed step in the biosynthesis of AMP from IMP. This Staphylococcus aureus (strain N315) protein is Adenylosuccinate synthetase.